The primary structure comprises 320 residues: N-acetylneuraminate lyase (320 aa).

Positions 51 and 52 each coordinate aceneuramate. Residue Tyr-143 is the Proton donor of the active site. Catalysis depends on Lys-173, which acts as the Schiff-base intermediate with substrate. Thr-175, Gly-199, Asp-201, Glu-202, and Ser-218 together coordinate aceneuramate. A Phosphoserine modification is found at Ser-308.

Belongs to the DapA family. NanA subfamily. As to quaternary structure, homotetramer.

The protein localises to the cytoplasm. It carries out the reaction aceneuramate = aldehydo-N-acetyl-D-mannosamine + pyruvate. It participates in amino-sugar metabolism; N-acetylneuraminate degradation. In terms of biological role, catalyzes the cleavage of N-acetylneuraminic acid (sialic acid) to form pyruvate and N-acetylmannosamine via a Schiff base intermediate. It prevents sialic acids from being recycled and returning to the cell surface. Involved in the N-glycolylneuraminic acid (Neu5Gc) degradation pathway. This is N-acetylneuraminate lyase from Mus musculus (Mouse).